Reading from the N-terminus, the 354-residue chain is MKKIVFTGGGTVGHVTLNLLLIPRFLEEGWEVHYIGDGNGIEHEQVVKSGLDVHFHSIATGKLRRYFSFQNMLDVFKVGFGVLQSLTIIAKIRPQALFSKGGFVSVPPVIAANLLRVPVFIHESDLTMGLANKIAYKFATTMYSTFEQPASLTKVKHVGAVTKVGQTNDKVTPIQLPEILSHFDKSLPTLLFVGGSGGAKVFNDLISQNSAALTERFNIINLTGDSSLNKLDKNLYRVDYVTELYQPLMDLADVVITRGGSNTLFELIAMQQLHLIVPLGRQASRGDQIENALYAEKKGYSKQIDESQLTFASLLVEVDELLKHKEFYVQNMANSNEIQSVDSFYNLLREDMGR.

Serine 196 and glutamine 288 together coordinate UDP-N-acetyl-alpha-D-glucosamine.

It belongs to the glycosyltransferase 28 family. MurG subfamily.

It is found in the cell membrane. It catalyses the reaction Mur2Ac(oyl-L-Ala-gamma-D-Glu-L-Lys-D-Ala-D-Ala)-di-trans,octa-cis-undecaprenyl diphosphate + UDP-N-acetyl-alpha-D-glucosamine = beta-D-GlcNAc-(1-&gt;4)-Mur2Ac(oyl-L-Ala-gamma-D-Glu-L-Lys-D-Ala-D-Ala)-di-trans,octa-cis-undecaprenyl diphosphate + UDP + H(+). It functions in the pathway cell wall biogenesis; peptidoglycan biosynthesis. Cell wall formation. Catalyzes the transfer of a GlcNAc subunit on undecaprenyl-pyrophosphoryl-MurNAc-pentapeptide (lipid intermediate I) to form undecaprenyl-pyrophosphoryl-MurNAc-(pentapeptide)GlcNAc (lipid intermediate II). This Streptococcus suis (strain 98HAH33) protein is UDP-N-acetylglucosamine--N-acetylmuramyl-(pentapeptide) pyrophosphoryl-undecaprenol N-acetylglucosamine transferase.